We begin with the raw amino-acid sequence, 801 residues long: Glycerol-3-phosphate acyltransferase 2, mitochondrial (801 aa).

Residues 1 to 24 (MDTMLKSNPQTQQRSNHNGQETSL) form a disordered region. Topologically, residues 1–305 (MDTMLKSNPQ…PGPRLSALGQ (305 aa)) are cytoplasmic. The tract at residues 180 to 290 (QLHKGQMKMV…SGQPLLIFLE (111 aa)) is acyltransferase. An HXXXXD motif motif is present at residues 205 to 210 (HKSLLD). The chain crosses the membrane as a helical span at residues 306–332 (AWLGVVIQAVQAGIISDATLVPVAIAY). Residues 333–449 (DLVPDAPCNM…QLLVRRLSRH (117 aa)) lie on the Mitochondrial intermembrane side of the membrane. The helical transmembrane segment at 450–472 (VLSASVASSAVMSTAIMATLLLL) threads the bilayer. At 473–801 (KHQKGVVLSQ…EQFIRQFICS (329 aa)) the chain is on the cytoplasmic side. Residue S662 is modified to Phosphoserine. Position 666 is a phosphothreonine (T666). Phosphoserine occurs at positions 668 and 670.

It belongs to the GPAT/DAPAT family. In terms of assembly, interacts with PIWIL2. Highly expressed in the testis. Expressed at lower levels in the heart, liver, kidney, spleen and adipose cells. Only detected in primary spermatocytes.

It is found in the mitochondrion outer membrane. It catalyses the reaction sn-glycerol 3-phosphate + an acyl-CoA = a 1-acyl-sn-glycero-3-phosphate + CoA. It carries out the reaction a 1-acyl-sn-glycero-3-phosphate + an acyl-CoA = a 1,2-diacyl-sn-glycero-3-phosphate + CoA. The enzyme catalyses 1-(9Z-octadecenoyl)-sn-glycero-3-phosphate + (9Z)-octadecenoyl-CoA = 1,2-di-(9Z-octadecenoyl)-sn-glycero-3-phosphate + CoA. The catalysed reaction is 1-(9Z-octadecenoyl)-sn-glycero-3-phosphate + (5Z,8Z,11Z,14Z)-eicosatetraenoyl-CoA = 1-(9Z)-octadecenoyl-2-(5Z,8Z,11Z,14Z)-eicosatetraenoyl-sn-glycero-3-phosphate + CoA. It catalyses the reaction (5Z,8Z,11Z,14Z)-eicosatetraenoyl-CoA + sn-glycerol 3-phosphate = 1-(5Z,8Z,11Z,14Z-eicosatetraenoyl)-sn-glycero-3-phosphate + CoA. Its pathway is phospholipid metabolism; CDP-diacylglycerol biosynthesis; CDP-diacylglycerol from sn-glycerol 3-phosphate: step 1/3. Inhibited by N-ethylmaleimide (NEM). Its function is as follows. Transfers an acyl-group from acyl-ACP to the sn-1 position of glycerol-3-phosphate producing a lysophosphatidic acid (LPA), an essential step for the triacylglycerol (TAG) and glycerophospholipids. In vitro also transfers an acyl-group from acyl-ACP to the LPA producing a phosphatidic acid (PA). Prefers arachidonoyl-CoA as the acyl donor. Required for primary processing step during piRNA biosynthesis. Molecular mechanisms by which it promotes piRNA biosynthesis are unclear and do not involve its acyltransferase activity. The polypeptide is Glycerol-3-phosphate acyltransferase 2, mitochondrial (Mus musculus (Mouse)).